The sequence spans 57 residues: Small ribosomal subunit protein bS21 (57 aa).

It belongs to the bacterial ribosomal protein bS21 family.

The protein is Small ribosomal subunit protein bS21 of Phytoplasma australiense.